A 365-amino-acid polypeptide reads, in one-letter code: Putative fatty acid elongase 2 (365 aa).

Over 1–68 (MPDSPTLHHN…SFEFIVNKTR (68 aa)) the chain is Lumenal. N-linked (GlcNAc...) asparagine glycosylation is found at Asn-17 and Asn-65. A helical membrane pass occupies residues 69-89 (FSSAPVVATIIISYYLLILVG). Topologically, residues 90–111 (GRIMRNRQPIRLQKIFQYYNLT) are cytoplasmic. The helical transmembrane segment at 112–132 (FSIASAILALLIFEQVAPAIY) threads the bilayer. Over 133–149 (KHGFFFSICNEKAWTQP) the chain is Lumenal. The chain crosses the membrane as a helical span at residues 150-170 (LVFLYYCAYISKFLELTDTFF). Residues 171–179 (LVLRKKPLQ) lie on the Cytoplasmic side of the membrane. A helical membrane pass occupies residues 180 to 198 (FLHCYHHGATAVLVYTQIV). Topologically, residues 199-204 (GRTSIS) are lumenal. The chain crosses the membrane as a helical span at residues 205 to 225 (WLIIEINLLVHVTMYYYYYLV). The Cytoplasmic portion of the chain corresponds to 226-241 (AKGIRVPWKKWVTRFQ). A helical transmembrane segment spans residues 242–262 (IVQFFADLGFIYFAVYTEVAY). Residues 263–278 (RLKFYKACMGHCSGHP) are Lumenal-facing. A helical membrane pass occupies residues 279 to 299 (LAAFCGLATISSYLVLFIVFY). Residues 300–365 (HNTYKKNAAL…PISSGLNNEK (66 aa)) lie on the Cytoplasmic side of the membrane.

Belongs to the ELO family.

The protein localises to the endoplasmic reticulum membrane. The catalysed reaction is a very-long-chain acyl-CoA + malonyl-CoA + H(+) = a very-long-chain 3-oxoacyl-CoA + CO2 + CoA. Its function is as follows. May be involved in the synthesis of very long chain fatty acids. The sequence is that of Putative fatty acid elongase 2 from Schizosaccharomyces pombe (strain 972 / ATCC 24843) (Fission yeast).